The primary structure comprises 298 residues: Glycine--tRNA ligase alpha subunit (298 aa).

It belongs to the class-II aminoacyl-tRNA synthetase family. Tetramer of two alpha and two beta subunits.

The protein resides in the cytoplasm. It catalyses the reaction tRNA(Gly) + glycine + ATP = glycyl-tRNA(Gly) + AMP + diphosphate. The sequence is that of Glycine--tRNA ligase alpha subunit from Helicobacter pylori (strain Shi470).